We begin with the raw amino-acid sequence, 364 residues long: S-adenosylmethionine:tRNA ribosyltransferase-isomerase (364 aa).

This sequence belongs to the QueA family. Monomer.

It is found in the cytoplasm. The catalysed reaction is 7-aminomethyl-7-carbaguanosine(34) in tRNA + S-adenosyl-L-methionine = epoxyqueuosine(34) in tRNA + adenine + L-methionine + 2 H(+). It functions in the pathway tRNA modification; tRNA-queuosine biosynthesis. Functionally, transfers and isomerizes the ribose moiety from AdoMet to the 7-aminomethyl group of 7-deazaguanine (preQ1-tRNA) to give epoxyqueuosine (oQ-tRNA). This chain is S-adenosylmethionine:tRNA ribosyltransferase-isomerase, found in Lachnoclostridium phytofermentans (strain ATCC 700394 / DSM 18823 / ISDg) (Clostridium phytofermentans).